Consider the following 50-residue polypeptide: MGSPEKLRPSDFSKSFLISSIRFAMSFSSFELYSACSSLIRVSSPTMAET.

This is an uncharacterized protein from Bacillus subtilis (Bacteriophage phi-105).